The primary structure comprises 115 residues: Nitrogen regulatory protein P-II 2 (115 aa).

The residue at position 54 (Y54) is an O-UMP-tyrosine.

This sequence belongs to the P(II) protein family.

Its function is as follows. Could be involved in the regulation of nitrogen fixation. In Methanothermobacter thermautotrophicus (strain ATCC 29096 / DSM 1053 / JCM 10044 / NBRC 100330 / Delta H) (Methanobacterium thermoautotrophicum), this protein is Nitrogen regulatory protein P-II 2.